Here is an 828-residue protein sequence, read N- to C-terminus: Glycerol-3-phosphate acyltransferase 1, mitochondrial (828 aa).

Residues 1–87 (MEESSVTIGT…FFNPSIPSLG (87 aa)) lie on the Cytoplasmic side of the membrane. An important for mitochondrial localization region spans residues 80–120 (NPSIPSLGLRNVIYINETHTRHRGWLARRLSYILFVQERDV). Residues 88–118 (LRNVIYINETHTRHRGWLARRLSYILFVQER) lie within the membrane without spanning it. Over 119 to 828 (DVHKGMFATS…LEYILSFVVL (710 aa)) the chain is Cytoplasmic. The short motif at 230–235 (HRSHID) is the HXXXXD motif element. Positions 278, 279, 288, 293, and 328 each coordinate CoA. S380 carries the post-translational modification Phosphoserine. R462 serves as a coordination point for CoA. Phosphoserine occurs at positions 688 and 695. N6-acetyllysine is present on residues K780 and K784.

This sequence belongs to the GPAT/DAPAT family.

Its subcellular location is the mitochondrion outer membrane. It carries out the reaction sn-glycerol 3-phosphate + an acyl-CoA = a 1-acyl-sn-glycero-3-phosphate + CoA. The catalysed reaction is sn-glycerol 3-phosphate + hexadecanoyl-CoA = 1-hexadecanoyl-sn-glycero-3-phosphate + CoA. The enzyme catalyses (9Z,12Z)-octadecadienoyl-CoA + sn-glycerol 3-phosphate = 1-(9Z,12Z)-octadecadienoyl-sn-glycero-3-phosphate + CoA. It catalyses the reaction sn-glycerol 3-phosphate + (9Z)-octadecenoyl-CoA = 1-(9Z-octadecenoyl)-sn-glycero-3-phosphate + CoA. It carries out the reaction sn-glycerol 3-phosphate + octadecanoyl-CoA = 1-octadecanoyl-sn-glycero-3-phosphate + CoA. The catalysed reaction is dodecanoyl-CoA + sn-glycerol 3-phosphate = 1-dodecanoyl-sn-glycerol 3-phosphate + CoA. The enzyme catalyses 1-acyl-sn-glycero-3-phospho-(1'-sn-glycerol) + an acyl-CoA = a 1,2-diacyl-sn-glycero-3-phospho-(1'-sn-glycerol) + CoA. Its pathway is phospholipid metabolism; CDP-diacylglycerol biosynthesis; CDP-diacylglycerol from sn-glycerol 3-phosphate: step 1/3. Mitochondrial membrane protein that catalyzes the essential first step of biosynthesis of glycerolipids such as triglycerides, phosphatidic acids and lysophosphatidic acids. Esterifies acyl-group from acyl-coenzyme A (acyl-CoA) to the sn-1 position of glycerol-3-phosphate, to produce lysophosphatidic acid. Has a narrow hydrophobic binding cleft that selects for a linear acyl chain. Catalytic activity is higher for substrates with a 16-carbon acyl chain. The polypeptide is Glycerol-3-phosphate acyltransferase 1, mitochondrial (Rattus norvegicus (Rat)).